A 192-amino-acid polypeptide reads, in one-letter code: GTP cyclohydrolase 1 (192 aa).

The Zn(2+) site is built by C82, H85, and C153.

The protein belongs to the GTP cyclohydrolase I family. In terms of assembly, toroid-shaped homodecamer, composed of two pentamers of five dimers.

It carries out the reaction GTP + H2O = 7,8-dihydroneopterin 3'-triphosphate + formate + H(+). It functions in the pathway cofactor biosynthesis; 7,8-dihydroneopterin triphosphate biosynthesis; 7,8-dihydroneopterin triphosphate from GTP: step 1/1. The protein is GTP cyclohydrolase 1 of Rickettsia bellii (strain OSU 85-389).